A 524-amino-acid chain; its full sequence is Putative ribose/galactose/methyl galactoside import ATP-binding protein 1 (524 aa).

ABC transporter domains follow at residues 29–270 (LEMR…VGRT) and 280–524 (VPIG…TGGH). 61–68 (GENGAGKS) is a binding site for ATP.

Belongs to the ABC transporter superfamily. Carbohydrate importer 2 (CUT2) (TC 3.A.1.2) family.

It is found in the cell inner membrane. The catalysed reaction is D-ribose(out) + ATP + H2O = D-ribose(in) + ADP + phosphate + H(+). It catalyses the reaction D-galactose(out) + ATP + H2O = D-galactose(in) + ADP + phosphate + H(+). Part of an ABC transporter complex involved in carbohydrate import. Could be involved in ribose, galactose and/or methyl galactoside import. Responsible for energy coupling to the transport system. The protein is Putative ribose/galactose/methyl galactoside import ATP-binding protein 1 of Rhizobium etli (strain ATCC 51251 / DSM 11541 / JCM 21823 / NBRC 15573 / CFN 42).